The sequence spans 231 residues: Platelet-activating factor acetylhydrolase IB subunit alpha1 (231 aa).

The residue at position 2 (serine 2) is an N-acetylserine. Position 2 is a phosphoserine (serine 2). Catalysis depends on residues serine 47, aspartate 192, and histidine 195.

It belongs to the 'GDSL' lipolytic enzyme family. Platelet-activating factor acetylhydrolase IB beta/gamma subunits subfamily. Forms a catalytic dimer which is either homodimer (alpha1/alpha1 homodimer) or heterodimer with PAFAH1B2 (alpha1/alpha2 heterodimer). Component of the cytosolic (PAF-AH (I)) heterotetrameric enzyme, which is composed of PAFAH1B1 (beta), PAFAH1B2 (alpha2) and PAFAH1B3 (alpha1) subunits. The catalytic activity of the enzyme resides in the alpha1 (PAFAH1B3) and alpha2 (PAFAH1B2) subunits, whereas the beta subunit (PAFAH1B1) has regulatory activity. Trimer formation is not essential for the catalytic activity. Interacts with VLDLR; this interaction may modulate the Reelin pathway. As to expression, in the adult, expressed in brain, skeletal muscle, kidney, thymus, spleen, colon, testis, ovary and peripheral blood leukocytes. In the fetus, highest expression occurs in brain.

Its subcellular location is the cytoplasm. It carries out the reaction a 1-O-alkyl-2-acetyl-sn-glycero-3-phosphocholine + H2O = a 1-O-alkyl-sn-glycero-3-phosphocholine + acetate + H(+). The catalysed reaction is 1-O-hexadecyl-2-acetyl-sn-glycero-3-phosphocholine + H2O = 1-O-hexadecyl-sn-glycero-3-phosphocholine + acetate + H(+). It catalyses the reaction 1-O-hexadecyl-2-acetyl-sn-glycero-3-phosphate + H2O = 1-O-hexadecyl-sn-glycero-3-phosphate + acetate + H(+). Its activity is regulated as follows. Beta subunit (PAFAH1B1) inhibits the acetylhydrolase activity of the alpha1/alpha1 catalytic homodimer. Its function is as follows. Alpha1 catalytic subunit of the cytosolic type I platelet-activating factor (PAF) acetylhydrolase (PAF-AH (I)) heterotetrameric enzyme that catalyzes the hydrolyze of the acetyl group at the sn-2 position of PAF and its analogs and modulates the action of PAF. The activity and substrate specificity of PAF-AH (I) are affected by its subunit composition. Both alpha1/alpha1 homodimer (PAFAH1B3/PAFAH1B3 homodimer) and alpha1/alpha2 heterodimer(PAFAH1B3/PAFAH1B2 heterodimer) hydrolyze 1-O-alkyl-2-acetyl-sn-glycero-3-phosphoric acid (AAGPA) more efficiently than PAF, but they have little hydrolytic activity towards 1-O-alkyl-2-acetyl-sn-glycero-3-phosphorylethanolamine (AAGPE). Plays an important role during the development of brain. The polypeptide is Platelet-activating factor acetylhydrolase IB subunit alpha1 (Homo sapiens (Human)).